Reading from the N-terminus, the 560-residue chain is Potassium-transporting ATPase potassium-binding subunit (560 aa).

Helical transmembrane passes span 6–26 (FLLI…LGSL), 63–83 (LLAI…ILMC), 132–152 (GLAV…FALI), 175–195 (LWVL…QGAI), 250–270 (LTNV…CFAF), 282–302 (AILW…MWAE), 327–347 (FGIL…CGAV), 356–376 (ALGG…FGGV), 379–399 (GLYG…LMIG), 416–436 (MTAL…ALAM), 483–503 (LLLA…VMAI), and 524–544 (GALF…LTFI).

It belongs to the KdpA family. In terms of assembly, the system is composed of three essential subunits: KdpA, KdpB and KdpC.

It is found in the cell inner membrane. Part of the high-affinity ATP-driven potassium transport (or Kdp) system, which catalyzes the hydrolysis of ATP coupled with the electrogenic transport of potassium into the cytoplasm. This subunit binds the periplasmic potassium ions and delivers the ions to the membrane domain of KdpB through an intramembrane tunnel. The protein is Potassium-transporting ATPase potassium-binding subunit of Cronobacter sakazakii (strain ATCC BAA-894) (Enterobacter sakazakii).